The sequence spans 430 residues: Tol-Pal system protein TolB (430 aa).

The first 19 residues, 1–19 (MKKQIFFTLILLISGLARA), serve as a signal peptide directing secretion.

The protein belongs to the TolB family. In terms of assembly, the Tol-Pal system is composed of five core proteins: the inner membrane proteins TolA, TolQ and TolR, the periplasmic protein TolB and the outer membrane protein Pal. They form a network linking the inner and outer membranes and the peptidoglycan layer.

It is found in the periplasm. Its function is as follows. Part of the Tol-Pal system, which plays a role in outer membrane invagination during cell division and is important for maintaining outer membrane integrity. This is Tol-Pal system protein TolB from Hahella chejuensis (strain KCTC 2396).